A 277-amino-acid chain; its full sequence is Small ribosomal subunit protein uS3 (277 aa).

Positions 43–111 constitute a KH type-2 domain; it reads IRKVMNKDLE…QVQLNIFEVK (69 aa). Residues 216 to 277 are disordered; sequence FEEQQAQQGN…EAAVEPETKE (62 aa). A compositionally biased stretch (basic and acidic residues) spans 264–277; the sequence is EVSKEAAVEPETKE.

It belongs to the universal ribosomal protein uS3 family. Part of the 30S ribosomal subunit. Forms a tight complex with proteins S10 and S14.

Its function is as follows. Binds the lower part of the 30S subunit head. Binds mRNA in the 70S ribosome, positioning it for translation. This chain is Small ribosomal subunit protein uS3, found in Bifidobacterium animalis subsp. lactis (strain AD011).